A 242-amino-acid polypeptide reads, in one-letter code: MQIFYFHVPAEMPADASPDAAVVIDVLRATTTIAWALHHGAEAVQAFADLEDLRAAAEAWPADQRLLLGERGGQTLAGFDLGNSPVAVVPATVSGKRLFMSTTNGTRALDRVRQVPLLVTAALPNREAVAQRLLKESPETVAIVGSGWEGTYSLEDSLAAGALAARLQELSQAVTLANDEATAATALWQQWRHDPEACLRTASHGQRLIRLGDHDDDFRCCAGLDQLSVVPTQQSPGVLQAI.

It belongs to the ComB family. Mg(2+) serves as cofactor.

The catalysed reaction is (2R)-O-phospho-3-sulfolactate + H2O = (2R)-3-sulfolactate + phosphate. The polypeptide is Probable 2-phosphosulfolactate phosphatase (Parasynechococcus marenigrum (strain WH8102)).